Here is a 337-residue protein sequence, read N- to C-terminus: Cytidine deaminase 2 (337 aa).

2 consecutive CMP/dCMP-type deaminase domains span residues 43–164 and 199–320; these read TDPI…FSSL and LDCS…LKYL. Position 84–86 (84–86) interacts with substrate; the sequence is NVD. His-97 contributes to the Zn(2+) binding site. Glu-99 serves as the catalytic Proton donor. Residues Cys-132 and Cys-135 each contribute to the Zn(2+) site.

This sequence belongs to the cytidine and deoxycytidylate deaminase family. In terms of assembly, homodimer. Zn(2+) serves as cofactor.

It carries out the reaction cytidine + H2O + H(+) = uridine + NH4(+). The enzyme catalyses 2'-deoxycytidine + H2O + H(+) = 2'-deoxyuridine + NH4(+). Functionally, this enzyme scavenges exogenous and endogenous cytidine and 2'-deoxycytidine for UMP synthesis. The polypeptide is Cytidine deaminase 2 (CDA2) (Arabidopsis thaliana (Mouse-ear cress)).